The chain runs to 144 residues: Ribosomal RNA large subunit methyltransferase H (144 aa).

Residues Leu63, Gly92, and 111–116 contribute to the S-adenosyl-L-methionine site; that span reads LSAMTL.

Belongs to the RNA methyltransferase RlmH family. In terms of assembly, homodimer.

It is found in the cytoplasm. It catalyses the reaction pseudouridine(1915) in 23S rRNA + S-adenosyl-L-methionine = N(3)-methylpseudouridine(1915) in 23S rRNA + S-adenosyl-L-homocysteine + H(+). Its function is as follows. Specifically methylates the pseudouridine at position 1915 (m3Psi1915) in 23S rRNA. In Prochlorococcus marinus (strain MIT 9313), this protein is Ribosomal RNA large subunit methyltransferase H.